A 337-amino-acid chain; its full sequence is Glyceraldehyde-3-phosphate dehydrogenase 3, cytosolic (337 aa).

Residues R13–I14, D35, and R82 each bind NAD(+). Residues S153–T155, T184, T213–G214, and R236 contribute to the D-glyceraldehyde 3-phosphate site. Residue C154 is the Nucleophile of the active site. N318 contacts NAD(+).

The protein belongs to the glyceraldehyde-3-phosphate dehydrogenase family. As to quaternary structure, homotetramer.

The protein localises to the cytoplasm. It catalyses the reaction D-glyceraldehyde 3-phosphate + phosphate + NAD(+) = (2R)-3-phospho-glyceroyl phosphate + NADH + H(+). It participates in carbohydrate degradation; glycolysis; pyruvate from D-glyceraldehyde 3-phosphate: step 1/5. Functionally, key enzyme in glycolysis that catalyzes the first step of the pathway by converting D-glyceraldehyde 3-phosphate (G3P) into 3-phospho-D-glyceroyl phosphate. Essential for the maintenance of cellular ATP levels and carbohydrate metabolism. This chain is Glyceraldehyde-3-phosphate dehydrogenase 3, cytosolic (GAPC3), found in Oryza sativa subsp. japonica (Rice).